Here is a 604-residue protein sequence, read N- to C-terminus: 3-hydroxy-3-methylglutaryl-coenzyme A reductase 2 (604 aa).

A run of 2 helical transmembrane segments spans residues 47–67 (LPLY…MYFL) and 91–111 (AIVS…IGFV). A linker region spans residues 112–188 (QTFVARGNND…APLVTPAASE (77 aa)). An N-linked (GlcNAc...) asparagine glycan is attached at asparagine 120. The tract at residues 189–604 (EDEEIIKSVV…STKDVTKASS (416 aa)) is catalytic. Residue glutamate 283 is the Charge relay system of the active site. N-linked (GlcNAc...) asparagine glycosylation is present at asparagine 347. Lysine 415 serves as the catalytic Charge relay system. A glycan (N-linked (GlcNAc...) asparagine) is linked at asparagine 460. Catalysis depends on aspartate 491, which acts as the Charge relay system. Histidine 589 acts as the Proton donor in catalysis. Asparagine 593 is a glycosylation site (N-linked (GlcNAc...) asparagine).

It belongs to the HMG-CoA reductase family.

It is found in the endoplasmic reticulum membrane. The enzyme catalyses (R)-mevalonate + 2 NADP(+) + CoA = (3S)-3-hydroxy-3-methylglutaryl-CoA + 2 NADPH + 2 H(+). It functions in the pathway metabolic intermediate biosynthesis; (R)-mevalonate biosynthesis; (R)-mevalonate from acetyl-CoA: step 3/3. Catalyzes the synthesis of mevalonate. The specific precursor of all isoprenoid compounds present in plants. The protein is 3-hydroxy-3-methylglutaryl-coenzyme A reductase 2 (HMGR2) of Capsicum annuum (Capsicum pepper).